The primary structure comprises 405 residues: G1/S-specific cyclin-D (405 aa).

The Cyclin N-terminal domain occupies 76–200; the sequence is FYNCMEYEEA…LIVTTLQWET (125 aa). A disordered region spans residues 301-405; that stretch reads YTSEDAEKTE…STPPKIFKTL (105 aa). Residues 311–321 are compositionally biased toward polar residues; the sequence is PTPSAPASTQE. The span at 326–335 shows a compositional bias: basic and acidic residues; it reads QELKELKEEP. Over residues 358–380 the composition is skewed to polar residues; that stretch reads SEQTPSTPLNDSGFSSDVSSPAS.

The protein belongs to the cyclin family. Cyclin D subfamily. In terms of assembly, interacts with cdk-4; the interaction is likely involved in regulating cdk-4 activity.

In association with cdk-4, regulates the progression through the G1 phase of the cell cycle during postembryonic development. Regulates proliferation of the coelomocyte lineage and intestinal cells during late embryogenesis. In complex with cdk-4, involved in sex determination during gonadogenesis by regulating the asymmetric division of the somatic gonadal precursor cell (SGP). The polypeptide is G1/S-specific cyclin-D (Caenorhabditis elegans).